The following is a 512-amino-acid chain: MENLFIFLFALLLFCFMLLKLSKKYSALKLPPGPRPLPIIGNLHQIGGGLMHHILREMARTYGPLFRIKFGQVSTIVVSSPEIAKEIFRTHDVVFSYRPQNIAVFNVMTYNFSNIAFAPYGNYWRQMRKICVMEILGASRVRSFGSIRQEEVMNLIRFVGSHKGKLVNVSEKIYGLTYSITARAAFGKVSKYQQVFKEHMDKYDDLARGLDIADFYPSMKFLRLVTGMERKLKVMFKEVDEILQVIIDEHRDQRMKKIRSKVDDNEKEEEEGNEDIVDVLMNLQQSGQTELPVTDDNIKAVILDIFGAGGDTTAATLEWALAESLKNKQVLKRAQEELRTIFHSKRNVDESGFNQLKYLPAIVKETLRLHPPAPLSLPRECSEECNIYGYDIPAKTRVMVNIWAMGRDPKYWSEPEEFKPERFIDSRIDYKGNDFEYIPFGAGRRICPGMSFAIPNVALPLAQLLFHFDWKVDDDAGKLEDLDMVEHPVLEARRKNELKLIPVIYEGSCLKN.

Positions 1–24 are cleaved as a signal peptide; the sequence is MENLFIFLFALLLFCFMLLKLSKK. N-linked (GlcNAc...) asparagine glycans are attached at residues Asn111 and Asn168. A heme-binding site is contributed by Cys447.

Belongs to the cytochrome P450 family.

In Catharanthus roseus (Madagascar periwinkle), this protein is Cytochrome P450 71BT1.